The following is a 241-amino-acid chain: Glucosamine-6-phosphate deaminase (241 aa).

Asp-67 acts as the Proton acceptor; for enolization step in catalysis. Asn-136 functions as the For ring-opening step in the catalytic mechanism. His-138 functions as the Proton acceptor; for ring-opening step in the catalytic mechanism. Glu-143 acts as the For ring-opening step in catalysis.

It belongs to the glucosamine/galactosamine-6-phosphate isomerase family. NagB subfamily.

It carries out the reaction alpha-D-glucosamine 6-phosphate + H2O = beta-D-fructose 6-phosphate + NH4(+). It participates in amino-sugar metabolism; N-acetylneuraminate degradation; D-fructose 6-phosphate from N-acetylneuraminate: step 5/5. Functionally, catalyzes the reversible isomerization-deamination of glucosamine 6-phosphate (GlcN6P) to form fructose 6-phosphate (Fru6P) and ammonium ion. This chain is Glucosamine-6-phosphate deaminase, found in Clostridium tetani (strain Massachusetts / E88).